A 936-amino-acid polypeptide reads, in one-letter code: Phosphoenolpyruvate carboxylase (936 aa).

Positions 1–20 (MSSLNLSAGPEPVSERPDDA) are disordered. Residues His164 and Lys598 contribute to the active site.

The protein belongs to the PEPCase type 1 family. The cofactor is Mg(2+).

The catalysed reaction is oxaloacetate + phosphate = phosphoenolpyruvate + hydrogencarbonate. In terms of biological role, forms oxaloacetate, a four-carbon dicarboxylic acid source for the tricarboxylic acid cycle. The chain is Phosphoenolpyruvate carboxylase (ppc) from Rhodopseudomonas palustris (strain ATCC BAA-98 / CGA009).